The following is a 288-amino-acid chain: Protein RepA (288 aa).

This sequence belongs to the initiator RepB protein family.

This protein is essential for plasmid replication; it is involved in copy control functions. This chain is Protein RepA (repA), found in Escherichia coli.